Consider the following 338-residue polypeptide: MSSPLITDFLHQAGRAAVIAGGLGTELQRHGADLNDPLWSAKCLLSCPHLIRQVHLDYLENGADIIITASYQATIQGFKAKGFSDEEGEALLRRSVEIAREARDLYYQRCAESSSDNGDDSRILKQRPILIAGSVGSYGAYLADGSEFSGNYGDAIKSETLKDFHRRKVQILADSGVDLLAFEAVPNKLEAQAYADLLEEENIITPAWFAFTSKDGNNVVSGDSIEECGSIAESCDKVVAVGINCTPPRFIHDLILLLKKVTAKPIVIYPNSGETYDAIRKEWGQNSGVTDEDFVSYVDKWCESGASLVGGCCRTTPDTIRGIYKILSSGQSPTFSAK.

The region spanning 1-327 is the Hcy-binding domain; the sequence is MSSPLITDFL…DTIRGIYKIL (327 aa). The Zn(2+) site is built by C245, C312, and C313.

As to quaternary structure, monomer. The cofactor is Zn(2+). As to expression, present in all tissues tested.

It catalyses the reaction S-methyl-L-methionine + L-selenocysteine = Se-methyl-L-selenocysteine + L-methionine + H(+). Functionally, catalyzes the methylation of selenocysteine with S-methylmethionine as donor. Does not methylate cysteine. The sequence is that of Selenocysteine methyltransferase (SMTA) from Astragalus bisulcatus (Two-grooved milkvetch).